Reading from the N-terminus, the 302-residue chain is Aspartate carbamoyltransferase catalytic subunit (302 aa).

Residues R51 and T52 each contribute to the carbamoyl phosphate site. K80 lines the L-aspartate pocket. Carbamoyl phosphate contacts are provided by R101, H129, and Q132. Residues R162 and R223 each coordinate L-aspartate. The carbamoyl phosphate site is built by L261 and P262.

It belongs to the aspartate/ornithine carbamoyltransferase superfamily. ATCase family. As to quaternary structure, heterododecamer (2C3:3R2) of six catalytic PyrB chains organized as two trimers (C3), and six regulatory PyrI chains organized as three dimers (R2).

The catalysed reaction is carbamoyl phosphate + L-aspartate = N-carbamoyl-L-aspartate + phosphate + H(+). It participates in pyrimidine metabolism; UMP biosynthesis via de novo pathway; (S)-dihydroorotate from bicarbonate: step 2/3. Functionally, catalyzes the condensation of carbamoyl phosphate and aspartate to form carbamoyl aspartate and inorganic phosphate, the committed step in the de novo pyrimidine nucleotide biosynthesis pathway. This chain is Aspartate carbamoyltransferase catalytic subunit, found in Chromobacterium violaceum (strain ATCC 12472 / DSM 30191 / JCM 1249 / CCUG 213 / NBRC 12614 / NCIMB 9131 / NCTC 9757 / MK).